A 633-amino-acid polypeptide reads, in one-letter code: tRNA uridine 5-carboxymethylaminomethyl modification enzyme MnmG (633 aa).

Residues Gly-15–Gly-20, Val-127, and Ser-182 each bind FAD. Position 276-290 (Gly-276–Phe-290) interacts with NAD(+). Gln-373 contributes to the FAD binding site.

The protein belongs to the MnmG family. Homodimer. Heterotetramer of two MnmE and two MnmG subunits. It depends on FAD as a cofactor.

The protein localises to the cytoplasm. In terms of biological role, NAD-binding protein involved in the addition of a carboxymethylaminomethyl (cmnm) group at the wobble position (U34) of certain tRNAs, forming tRNA-cmnm(5)s(2)U34. The sequence is that of tRNA uridine 5-carboxymethylaminomethyl modification enzyme MnmG from Streptococcus thermophilus (strain ATCC BAA-491 / LMD-9).